The primary structure comprises 131 residues: Prefoldin subunit beta (131 aa).

Disordered stretches follow at residues 19 to 41 and 112 to 131; these read LQET…RESE and LQGG…AGGA. A compositionally biased stretch (low complexity) spans 20-35; that stretch reads QETAQQVAQQKQQAET. A compositionally biased stretch (gly residues) spans 114–131; it reads GGAGGGPMGPGGPGAGGA.

The protein belongs to the prefoldin subunit beta family. As to quaternary structure, heterohexamer of two alpha and four beta subunits.

It is found in the cytoplasm. Functionally, molecular chaperone capable of stabilizing a range of proteins. Seems to fulfill an ATP-independent, HSP70-like function in archaeal de novo protein folding. This chain is Prefoldin subunit beta, found in Natronomonas pharaonis (strain ATCC 35678 / DSM 2160 / CIP 103997 / JCM 8858 / NBRC 14720 / NCIMB 2260 / Gabara) (Halobacterium pharaonis).